The primary structure comprises 129 residues: uncharacterized protein (129 aa).

2 consecutive C2H2-type zinc fingers follow at residues 75-99 (FVCP…YTEH) and 101-124 (KVCP…CKKH).

Functionally, essential for virus function. This is an uncharacterized protein from Saccharolobus solfataricus (Sulfolobus solfataricus).